Reading from the N-terminus, the 144-residue chain is D-aminoacyl-tRNA deacylase (144 aa).

The Gly-cisPro motif, important for rejection of L-amino acids signature appears at 136 to 137 (GP).

It belongs to the DTD family. Homodimer.

It is found in the cytoplasm. The catalysed reaction is glycyl-tRNA(Ala) + H2O = tRNA(Ala) + glycine + H(+). It carries out the reaction a D-aminoacyl-tRNA + H2O = a tRNA + a D-alpha-amino acid + H(+). An aminoacyl-tRNA editing enzyme that deacylates mischarged D-aminoacyl-tRNAs. Also deacylates mischarged glycyl-tRNA(Ala), protecting cells against glycine mischarging by AlaRS. Acts via tRNA-based rather than protein-based catalysis; rejects L-amino acids rather than detecting D-amino acids in the active site. By recycling D-aminoacyl-tRNA to D-amino acids and free tRNA molecules, this enzyme counteracts the toxicity associated with the formation of D-aminoacyl-tRNA entities in vivo and helps enforce protein L-homochirality. The chain is D-aminoacyl-tRNA deacylase from Haemophilus influenzae (strain PittEE).